The sequence spans 98 residues: Large ribosomal subunit protein bL28 (98 aa).

Part of the 50S ribosomal subunit.

This is Large ribosomal subunit protein bL28 (rpmB) from Thermus thermophilus (strain ATCC 27634 / DSM 579 / HB8).